Here is a 176-residue protein sequence, read N- to C-terminus: Ribosome rescue factor SmrB (176 aa).

One can recognise a Smr domain in the interval 93-168 (LDLHGYRQSE…GDAALLVLID (76 aa)).

It belongs to the SmrB family. Associates with collided ribosomes, but not with correctly translating polysomes.

In terms of biological role, acts as a ribosome collision sensor. Detects stalled/collided disomes (pairs of ribosomes where the leading ribosome is stalled and a second ribosome has collided with it) and endonucleolytically cleaves mRNA at the 5' boundary of the stalled ribosome. Stalled/collided disomes form a new interface (primarily via the 30S subunits) that binds SmrB. Cleaved mRNA becomes available for tmRNA ligation, leading to ribosomal subunit dissociation and rescue of stalled ribosomes. The protein is Ribosome rescue factor SmrB of Shewanella sp. (strain ANA-3).